Reading from the N-terminus, the 670-residue chain is Transketolase, plasmid (670 aa).

His-32 contacts substrate. Residues His-72 and 120-122 (GPL) each bind thiamine diphosphate. Asp-161 is a Mg(2+) binding site. Thiamine diphosphate-binding residues include Gly-162 and Asn-191. Mg(2+) contacts are provided by Asn-191 and Ile-193. Substrate contacts are provided by His-267, Arg-364, and Ser-391. His-267 serves as a coordination point for thiamine diphosphate. The active-site Proton donor is the Glu-417. Residue Phe-443 participates in thiamine diphosphate binding. His-467, Asp-475, and Arg-526 together coordinate substrate.

This sequence belongs to the transketolase family. Homodimer. Requires Mg(2+) as cofactor. Ca(2+) serves as cofactor. It depends on Mn(2+) as a cofactor. The cofactor is Co(2+). Thiamine diphosphate is required as a cofactor.

The enzyme catalyses D-sedoheptulose 7-phosphate + D-glyceraldehyde 3-phosphate = aldehydo-D-ribose 5-phosphate + D-xylulose 5-phosphate. Its pathway is carbohydrate biosynthesis; Calvin cycle. Catalyzes the transfer of a two-carbon ketol group from a ketose donor to an aldose acceptor, via a covalent intermediate with the cofactor thiamine pyrophosphate. The polypeptide is Transketolase, plasmid (cbbTP) (Cupriavidus necator (strain ATCC 17699 / DSM 428 / KCTC 22496 / NCIMB 10442 / H16 / Stanier 337) (Ralstonia eutropha)).